Consider the following 582-residue polypeptide: Semenogelin-2 (582 aa).

The signal sequence occupies residues 1 to 23 (MKSIILFVLSLLLILEKQAAVMG). 3 disordered regions span residues 25–62 (KGGSKGQLSSGSSRFPHRHRSQHYSGQKDKQHTESKGS), 91–190 (HKTT…QGGS), and 272–553 (NLNQ…FSGA). Residues 50-59 (GQKDKQHTES) are compositionally biased toward basic and acidic residues. A compositionally biased stretch (basic residues) spans 92–134 (KTTKSKQHLRRHQRLLNYKQKGRGRVKPKRHFHLIVIHRKGGQ). Composition is skewed to polar residues over residues 137 to 161 (HGTQNPSQDQGNSPSGKGISSQYSN) and 174 to 190 (EQASASGAQKGRTQGGS). Basic and acidic residues predominate over residues 293–305 (TEERQPNHEEKSV). Residues 325–335 (KSQNQVTIPSQ) show a composition bias toward polar residues. Over residues 336–345 (DQEHGHKENK) the composition is skewed to basic and acidic residues. A compositionally biased stretch (polar residues) spans 385–395 (KSQNQVAIPSQ). The span at 396–405 (DQEHGHKENK) shows a compositional bias: basic and acidic residues. Over residues 445–455 (KSQNQVTIPSQ) the composition is skewed to polar residues. Positions 456 to 465 (DQEHGHKENK) are enriched in basic and acidic residues. 2 stretches are compositionally biased toward polar residues: residues 487–498 (KDVSQSSLSFQT) and 506–529 (SQIQTPNPNQGQWSGQNAKGNSGK). Basic and acidic residues predominate over residues 530-546 (SADRKQDLLSHEQEGRY).

It belongs to the semenogelin family. In terms of assembly, interacts with SERPINA5.

It localises to the secreted. Participates in the formation of a gel matrix (sperm coagulum) entrapping the accessory gland secretions and ejaculated spermatozoa. The protein is Semenogelin-2 (SEMG2) of Macaca fascicularis (Crab-eating macaque).